The primary structure comprises 340 residues: TD and POZ domain-containing protein 5 (340 aa).

Residues 19 to 149 (EFCYVWTIRN…ENKLTLCCKV (131 aa)) enclose the MATH domain. In terms of domain architecture, BTB spans 188–255 (TDCCLLVAGH…IYTGKAPHLQ (68 aa)).

The protein belongs to the Tdpoz family.

This Mus musculus (Mouse) protein is TD and POZ domain-containing protein 5.